The primary structure comprises 201 residues: Small ribosomal subunit protein uS4 (201 aa).

Positions 91 to 157 (SRLDNVIYRA…VPFQIARETA (67 aa)) constitute an S4 RNA-binding domain.

The protein belongs to the universal ribosomal protein uS4 family. In terms of assembly, part of the 30S ribosomal subunit. Contacts protein S5. The interaction surface between S4 and S5 is involved in control of translational fidelity.

In terms of biological role, one of the primary rRNA binding proteins, it binds directly to 16S rRNA where it nucleates assembly of the body of the 30S subunit. Its function is as follows. With S5 and S12 plays an important role in translational accuracy. The polypeptide is Small ribosomal subunit protein uS4 (Mycobacterium tuberculosis (strain ATCC 25177 / H37Ra)).